A 294-amino-acid chain; its full sequence is Beta-glucoside kinase (294 aa).

5 to 11 (AFDIGGT) is an ATP binding site.

Belongs to the ROK (NagC/XylR) family.

It carries out the reaction D-cellobiose + ATP = 6-phospho-beta-D-glucosyl-(1-&gt;4)-D-glucose + ADP + H(+). In terms of biological role, catalyzes the ATP-dependent phosphorylation of cellobiose to produce cellobiose-6'-P. May have a dual role of kinase and transcriptional regulator of the cellobiose-PTS operon. This is Beta-glucoside kinase (bglK) from Listeria monocytogenes serovar 1/2a (strain ATCC BAA-679 / EGD-e).